The following is a 227-amino-acid chain: Phosphatidylethanolamine-binding protein 4 (227 aa).

The signal sequence occupies residues Met1 to Gly22. Asn169 carries N-linked (GlcNAc...) (complex) asparagine glycosylation. The tract at residues Glu188–Cys227 is important for secretion. The segment at Asp202–Cys227 is disordered. Positions Pro209–Gln221 are enriched in basic and acidic residues.

The protein belongs to the phosphatidylethanolamine-binding protein family.

Its subcellular location is the secreted. Its function is as follows. Promotes AKT phosphorylation, suggesting a possible role in the PI3K-AKT signaling pathway. The protein is Phosphatidylethanolamine-binding protein 4 (PEBP4) of Homo sapiens (Human).